A 663-amino-acid chain; its full sequence is MNGKLYHGACFYPELWDEDVLDEDIRMMERIGINVVRIGEFAWSRMEPEKGRIDVGFFADVIRKLRDNKIETVMCTPTATPPIWLTHGHPERMHVNEKGETMGHGSRQHACTNHPYFRERARLIIKHIAKEIGELPGLIGWQLDNEFKCHVAECICETCRTLWHKWLEDRYQTIDRLNEAWGTGVWSETYQCFEQVPQPGPTPFLHNSSLRTMYQLFSMDKISEFAREQAEVIRAYSDAPITHNSSVMFGVDHEDLFKSLDFASFDTYASQENSQAFLFNCDLWRNIKKGRPFWIMETSPSYSASLESYAAPHQNGYLKAEAVSSYALGGAAFCYWLWRQQRAGSEQPHGSVLSAWGEPDVGYENVLEAERARREVEHIMLATAPLQAETAVVYSDRAKVFLKTEPHRGLHYRTLITEFYDRLLKMGIHRDVILEGSPLDGYKLLFTPFIHYLPPAFIKKAEAFAQSGGIWIAGPLTGGRTEHHTIHTDCGLGPLEKCSGVKTLFTFPMDERNSSGTAFGVKAPLSLWSAVFEAGGTKAVGMIEKGPASGKAFITEHKCGKGKIVMLGSMPAGEAGDIMMKKLISHYAEEAGVEQKTDVTPGTVVAPRKGADGLVWVVINMDGKGGAVTLDGNGTDLLSGRPVTGRVTLGPHDYRVILLSENK.

Position 107 (Arg-107) interacts with substrate. Cys-111 is a Zn(2+) binding site. Asn-145 lines the substrate pocket. Residue Glu-146 is the Proton donor of the active site. Positions 154, 156, and 159 each coordinate Zn(2+). The active-site Nucleophile is Glu-297. Position 346–349 (346–349) interacts with substrate; that stretch reads EQPH.

It belongs to the glycosyl hydrolase 42 family. In terms of assembly, homotrimer.

The enzyme catalyses Hydrolysis of terminal non-reducing beta-D-galactose residues in beta-D-galactosides.. Its function is as follows. May play a role in the degradation of rhamnogalacturonan derived from plant cell walls. In Bacillus licheniformis (strain ATCC 14580 / DSM 13 / JCM 2505 / CCUG 7422 / NBRC 12200 / NCIMB 9375 / NCTC 10341 / NRRL NRS-1264 / Gibson 46), this protein is Beta-galactosidase YesZ (yesZ).